Here is a 491-residue protein sequence, read N- to C-terminus: Probable cytosol aminopeptidase (491 aa).

2 residues coordinate Mn(2+): Lys261 and Asp266. Lys273 is an active-site residue. Mn(2+) contacts are provided by Asp284, Asp343, and Glu345. The active site involves Arg347.

It belongs to the peptidase M17 family. The cofactor is Mn(2+).

Its subcellular location is the cytoplasm. It carries out the reaction Release of an N-terminal amino acid, Xaa-|-Yaa-, in which Xaa is preferably Leu, but may be other amino acids including Pro although not Arg or Lys, and Yaa may be Pro. Amino acid amides and methyl esters are also readily hydrolyzed, but rates on arylamides are exceedingly low.. The enzyme catalyses Release of an N-terminal amino acid, preferentially leucine, but not glutamic or aspartic acids.. Functionally, presumably involved in the processing and regular turnover of intracellular proteins. Catalyzes the removal of unsubstituted N-terminal amino acids from various peptides. The chain is Probable cytosol aminopeptidase from Stenotrophomonas maltophilia (strain K279a).